The chain runs to 810 residues: Exocyst complex component 6B (810 aa).

A coiled-coil region spans residues 79–118 (TELLKVRGEAQKLKNQVTDTNRKLQHEGKELVIAMEELKQ). The tract at residues 258-282 (ESTSPKSEQDSGILDVEDEEDDEEV) is disordered. The span at 272-282 (DVEDEEDDEEV) shows a compositional bias: acidic residues.

The protein belongs to the SEC15 family. As to quaternary structure, the exocyst complex is composed of SEC3, SEC5, SEC6, SEC8, SEC10, SEC15, EXO70 and EXO84.

In terms of biological role, component of the exocyst complex involved in the docking of exocytic vesicles with fusion sites on the plasma membrane. The polypeptide is Exocyst complex component 6B (Exoc6b) (Mus musculus (Mouse)).